We begin with the raw amino-acid sequence, 303 residues long: Aspartate carbamoyltransferase catalytic subunit (303 aa).

Arginine 49 and threonine 50 together coordinate carbamoyl phosphate. L-aspartate is bound at residue lysine 77. 3 residues coordinate carbamoyl phosphate: arginine 99, histidine 126, and glutamine 129. Residues arginine 159 and arginine 211 each coordinate L-aspartate. Carbamoyl phosphate contacts are provided by serine 252 and proline 253.

The protein belongs to the aspartate/ornithine carbamoyltransferase superfamily. ATCase family. In terms of assembly, heterododecamer (2C3:3R2) of six catalytic PyrB chains organized as two trimers (C3), and six regulatory PyrI chains organized as three dimers (R2).

The catalysed reaction is carbamoyl phosphate + L-aspartate = N-carbamoyl-L-aspartate + phosphate + H(+). Its pathway is pyrimidine metabolism; UMP biosynthesis via de novo pathway; (S)-dihydroorotate from bicarbonate: step 2/3. Functionally, catalyzes the condensation of carbamoyl phosphate and aspartate to form carbamoyl aspartate and inorganic phosphate, the committed step in the de novo pyrimidine nucleotide biosynthesis pathway. The chain is Aspartate carbamoyltransferase catalytic subunit from Listeria monocytogenes serotype 4b (strain F2365).